The following is a 379-amino-acid chain: Ribosomal RNA large subunit methyltransferase G (379 aa).

It belongs to the methyltransferase superfamily. RlmG family.

It is found in the cytoplasm. It carries out the reaction guanosine(1835) in 23S rRNA + S-adenosyl-L-methionine = N(2)-methylguanosine(1835) in 23S rRNA + S-adenosyl-L-homocysteine + H(+). Its function is as follows. Specifically methylates the guanine in position 1835 (m2G1835) of 23S rRNA. The polypeptide is Ribosomal RNA large subunit methyltransferase G (Pectobacterium atrosepticum (strain SCRI 1043 / ATCC BAA-672) (Erwinia carotovora subsp. atroseptica)).